Reading from the N-terminus, the 399-residue chain is Acetate kinase (399 aa).

Residue asparagine 7 coordinates Mg(2+). Lysine 14 is an ATP binding site. Arginine 91 provides a ligand contact to substrate. Aspartate 148 functions as the Proton donor/acceptor in the catalytic mechanism. Residues 208 to 212 (HLGNG), 283 to 285 (DFR), and 331 to 335 (GLGEN) contribute to the ATP site. Mg(2+) is bound at residue glutamate 384.

This sequence belongs to the acetokinase family. In terms of assembly, homodimer. Mg(2+) is required as a cofactor. The cofactor is Mn(2+).

The protein localises to the cytoplasm. The catalysed reaction is acetate + ATP = acetyl phosphate + ADP. It functions in the pathway metabolic intermediate biosynthesis; acetyl-CoA biosynthesis; acetyl-CoA from acetate: step 1/2. In terms of biological role, catalyzes the formation of acetyl phosphate from acetate and ATP. Can also catalyze the reverse reaction. This chain is Acetate kinase, found in Desulfitobacterium hafniense (strain DSM 10664 / DCB-2).